A 384-amino-acid chain; its full sequence is Probable E3 ubiquitin-protein ligase rnf113 (384 aa).

Residues 1–11 (MDLFRKPKKRN) show a composition bias toward basic residues. The interval 1 to 96 (MDLFRKPKKR…GPSGPRDQGA (96 aa)) is disordered. Residues 42–52 (PMVQSTKQLDA) are compositionally biased toward polar residues. The span at 60–71 (SSDDSDDSDDNQ) shows a compositional bias: acidic residues. Residues 175-203 (DFAPDICKDYKETGFCTFGDSCKFVHDRS) form a C3H1-type zinc finger. The RING-type zinc-finger motif lies at 241–279 (CFICGNPFVDPIVTKCKHYFCTGCALKSFQKSSKCPICQ). The tract at residues 299 to 384 (KKQQQKQEAE…ESDDDDAEKD (86 aa)) is disordered. Basic and acidic residues-rich tracts occupy residues 303-312 (QKQEAEKQEE) and 320-334 (EKPHECDDHHHHDHE). A compositionally biased stretch (acidic residues) spans 351–384 (EKSDEEQEIMMEDVEGLEGGENDSESDDDDAEKD).

It catalyses the reaction S-ubiquitinyl-[E2 ubiquitin-conjugating enzyme]-L-cysteine + [acceptor protein]-L-lysine = [E2 ubiquitin-conjugating enzyme]-L-cysteine + N(6)-ubiquitinyl-[acceptor protein]-L-lysine.. It functions in the pathway protein modification; protein ubiquitination. May function as E3 ubiquitin-protein ligase that catalyzes the transfer of ubiquitin onto target proteins. May play a role in DNA repair via its role in the synthesis of 'Lys-63'-linked polyubiquitin chains that recruit proteins involved in repair to sites of DNA damage by alkylating agents. The polypeptide is Probable E3 ubiquitin-protein ligase rnf113 (rnf-113) (Caenorhabditis elegans).